The primary structure comprises 244 residues: Transcription factor A, mitochondrial (244 aa).

The transit peptide at 1–42 directs the protein to the mitochondrion; that stretch reads MALFRGMWGVLRTLGRTGVEMCAGCGGRIPSPVSLICIPKCF. Residues 49–117 constitute a DNA-binding region (HMG box 1); the sequence is PKKPMSSYLR…VYKEAVSKYK (69 aa). Phosphoserine; by PKA occurs at positions 54, 55, and 60. The residue at position 66 (lysine 66) is an N6-succinyllysine. Phosphothreonine is present on threonine 121. Residues 154–218 constitute a DNA-binding region (HMG box 2); the sequence is PKRPRSAYNI…RYDNEMKSWE (65 aa). The residue at position 159 (serine 159) is a Phosphoserine; by PKA. A Phosphoserine modification is found at serine 192. The segment at 221-244 is disordered; the sequence is MAEVGRSDLIRRSVKRPPGDISEN.

As to quaternary structure, monomer; binds DNA as a monomer. Homodimer. Component of the mitochondrial transcription initiation complex, composed at least of TFB2M, TFAM and POLRMT. In this complex TFAM recruits POLRMT to the promoter whereas TFB2M induces structural changes in POLRMT to enable promoter opening and trapping of the DNA non-template strand. Upon metabolic stress, forms a complex composed of FOXO3, SIRT3, TFAM and POLRMT. Interacts with TFB1M and TFB2M. Interacts with CLPX; this enhances DNA-binding. Post-translationally, phosphorylation by PKA within the HMG box 1 impairs DNA binding and promotes degradation by the AAA+ Lon protease. In terms of tissue distribution, the mitochondrial isoform is widely expressed while the nuclear isoform is testis-specific.

It localises to the mitochondrion. The protein resides in the mitochondrion matrix. Its subcellular location is the mitochondrion nucleoid. It is found in the nucleus. Its function is as follows. Binds to the mitochondrial light strand promoter and functions in mitochondrial transcription regulation. Component of the mitochondrial transcription initiation complex, composed at least of TFB2M, TFAM and POLRMT that is required for basal transcription of mitochondrial DNA. In this complex, TFAM recruits POLRMT to a specific promoter whereas TFB2M induces structural changes in POLRMT to enable promoter opening and trapping of the DNA non-template strand. Required for accurate and efficient promoter recognition by the mitochondrial RNA polymerase. Promotes transcription initiation from the HSP1 and the light strand promoter by binding immediately upstream of transcriptional start sites. Is able to unwind DNA. Bends the mitochondrial light strand promoter DNA into a U-turn shape via its HMG boxes. Required for maintenance of normal levels of mitochondrial DNA. May play a role in organizing and compacting mitochondrial DNA. Functionally, may also function as a transcriptional activator or may have a structural role in the compaction of nuclear DNA during spermatogenesis. The chain is Transcription factor A, mitochondrial from Rattus norvegicus (Rat).